Consider the following 526-residue polypeptide: Bifunctional purine biosynthesis protein PurH (526 aa).

Residues 1–149 enclose the MGS-like domain; the sequence is MLHSLPIRRA…KNHEAVTVVV (149 aa).

Belongs to the PurH family.

The enzyme catalyses (6R)-10-formyltetrahydrofolate + 5-amino-1-(5-phospho-beta-D-ribosyl)imidazole-4-carboxamide = 5-formamido-1-(5-phospho-D-ribosyl)imidazole-4-carboxamide + (6S)-5,6,7,8-tetrahydrofolate. The catalysed reaction is IMP + H2O = 5-formamido-1-(5-phospho-D-ribosyl)imidazole-4-carboxamide. Its pathway is purine metabolism; IMP biosynthesis via de novo pathway; 5-formamido-1-(5-phospho-D-ribosyl)imidazole-4-carboxamide from 5-amino-1-(5-phospho-D-ribosyl)imidazole-4-carboxamide (10-formyl THF route): step 1/1. It functions in the pathway purine metabolism; IMP biosynthesis via de novo pathway; IMP from 5-formamido-1-(5-phospho-D-ribosyl)imidazole-4-carboxamide: step 1/1. The sequence is that of Bifunctional purine biosynthesis protein PurH from Rhodospirillum rubrum (strain ATCC 11170 / ATH 1.1.1 / DSM 467 / LMG 4362 / NCIMB 8255 / S1).